A 281-amino-acid chain; its full sequence is ATP phosphoribosyltransferase (281 aa).

It belongs to the ATP phosphoribosyltransferase family. Long subfamily. Requires Mg(2+) as cofactor.

Its subcellular location is the cytoplasm. It carries out the reaction 1-(5-phospho-beta-D-ribosyl)-ATP + diphosphate = 5-phospho-alpha-D-ribose 1-diphosphate + ATP. It participates in amino-acid biosynthesis; L-histidine biosynthesis; L-histidine from 5-phospho-alpha-D-ribose 1-diphosphate: step 1/9. Feedback inhibited by histidine. Functionally, catalyzes the condensation of ATP and 5-phosphoribose 1-diphosphate to form N'-(5'-phosphoribosyl)-ATP (PR-ATP). Has a crucial role in the pathway because the rate of histidine biosynthesis seems to be controlled primarily by regulation of HisG enzymatic activity. The protein is ATP phosphoribosyltransferase of Salinispora tropica (strain ATCC BAA-916 / DSM 44818 / JCM 13857 / NBRC 105044 / CNB-440).